We begin with the raw amino-acid sequence, 73 residues long: UPF0346 protein Lreu_0775 (73 aa).

The protein belongs to the UPF0346 family.

This is UPF0346 protein Lreu_0775 from Limosilactobacillus reuteri (strain DSM 20016) (Lactobacillus reuteri).